The primary structure comprises 624 residues: ATP-dependent RNA helicase MRH4, mitochondrial (624 aa).

The N-terminal 43 residues, 1–43 (MSPVASTCLLCEMRTVVWGWQPAVPQPWHFVRFASSARLARRK), are a transit peptide targeting the mitochondrion. The interval 41 to 120 (RRKPARMALS…KDAADKKQDG (80 aa)) is disordered. Residues 86 to 119 (RLPDRPIPRSDAELKRSSSDLNNKEKDAADKKQD) show a composition bias toward basic and acidic residues. Positions 151-184 (TSFDQFPLLPQVREAVYANAFPTLTEISPTPIQR) match the Q motif motif. Residues 212–427 (EEELFHFDQF…EKKFPEMKRL (216 aa)) form the Helicase ATP-binding domain. Residue 225–232 (AETGTGKT) coordinates ATP. The DEAD box signature appears at 374–377 (DEAD). Positions 438-624 (RVQLGVVDVD…EAMFRGQALI (187 aa)) constitute a Helicase C-terminal domain.

The protein belongs to the DEAD box helicase family. MRH4 subfamily.

It is found in the mitochondrion. The catalysed reaction is ATP + H2O = ADP + phosphate + H(+). Its function is as follows. ATP-binding RNA helicase involved in mitochondrial RNA metabolism. Required for maintenance of mitochondrial DNA. The sequence is that of ATP-dependent RNA helicase MRH4, mitochondrial (MRH4) from Ajellomyces capsulatus (strain NAm1 / WU24) (Darling's disease fungus).